Reading from the N-terminus, the 378-residue chain is Chaperone protein DnaJ (378 aa).

The region spanning 5–70 (DYYEVLSVGR…DKKAAYDQFG (66 aa)) is the J domain. A CR-type zinc finger spans residues 133 to 211 (GLTKELRIPT…CHGEGRVEKS (79 aa)). Residues cysteine 146, cysteine 149, cysteine 163, cysteine 166, cysteine 185, cysteine 188, cysteine 199, and cysteine 202 each contribute to the Zn(2+) site. CXXCXGXG motif repeat units follow at residues 146-153 (CDTCDGSG), 163-170 (CGTCHGQG), 185-192 (CPTCHGRG), and 199-206 (CNSCHGEG).

Belongs to the DnaJ family. Homodimer. Zn(2+) serves as cofactor.

It localises to the cytoplasm. Its function is as follows. Participates actively in the response to hyperosmotic and heat shock by preventing the aggregation of stress-denatured proteins and by disaggregating proteins, also in an autonomous, DnaK-independent fashion. Unfolded proteins bind initially to DnaJ; upon interaction with the DnaJ-bound protein, DnaK hydrolyzes its bound ATP, resulting in the formation of a stable complex. GrpE releases ADP from DnaK; ATP binding to DnaK triggers the release of the substrate protein, thus completing the reaction cycle. Several rounds of ATP-dependent interactions between DnaJ, DnaK and GrpE are required for fully efficient folding. Also involved, together with DnaK and GrpE, in the DNA replication of plasmids through activation of initiation proteins. This Shewanella woodyi (strain ATCC 51908 / MS32) protein is Chaperone protein DnaJ.